The sequence spans 507 residues: Glutamyl-tRNA(Gln) amidotransferase subunit A, mitochondrial (507 aa).

The interval 29–51 (THPPEPIPPPPPPAPSSSPSPKQ) is disordered. Over residues 31-46 (PPEPIPPPPPPAPSSS) the composition is skewed to pro residues. Residues Lys57 and Ser135 each act as charge relay system in the active site. The active-site Acyl-ester intermediate is Ser159.

It belongs to the amidase family. GatA subfamily. As to quaternary structure, subunit of the heterotrimeric GatCAB amidotransferase (AdT) complex, composed of A, B and C subunits.

It localises to the mitochondrion. It catalyses the reaction L-glutamyl-tRNA(Gln) + L-glutamine + ATP + H2O = L-glutaminyl-tRNA(Gln) + L-glutamate + ADP + phosphate + H(+). Functionally, allows the formation of correctly charged Gln-tRNA(Gln) through the transamidation of misacylated Glu-tRNA(Gln) in the mitochondria. The reaction takes place in the presence of glutamine and ATP through an activated gamma-phospho-Glu-tRNA(Gln). The chain is Glutamyl-tRNA(Gln) amidotransferase subunit A, mitochondrial from Podospora anserina (strain S / ATCC MYA-4624 / DSM 980 / FGSC 10383) (Pleurage anserina).